The chain runs to 651 residues: LysM domain receptor-like kinase 3 (651 aa).

The N-terminal stretch at 1–19 (MNLTFYIFFLSLLPSFSSS) is a signal peptide. 8 N-linked (GlcNAc...) asparagine glycosylation sites follow: Asn2, Asn23, Asn42, Asn73, Asn86, Asn100, Asn114, and Asn177. Topologically, residues 20–236 (KPMNCSDTTR…TAKSGSHVPY (217 aa)) are extracellular. Disulfide bonds link Cys24-Cys76, Cys31-Cys133, and Cys74-Cys131. Positions 142–186 (MSYVAMAGDSVQSLSSRFGVSMDRIEDVNGILNLDNITAGDLLYI) constitute a LysM domain. Residues 196 to 216 (YETSKINPPAPSPAPASSLAN) are disordered. Residues Asn218 and Asn225 are each glycosylated (N-linked (GlcNAc...) asparagine). Residues 237 to 257 (IWIVGGLGVVLALLVLCILVC) traverse the membrane as a helical segment. Residues 258 to 651 (ICLRSSSCSS…QVFSGLVQGR (394 aa)) are Cytoplasmic-facing. Phosphothreonine is present on Thr330. In terms of domain architecture, Protein kinase spans 341-628 (FSDSNLLGHG…VVISLSQILL (288 aa)). ATP is bound by residues 347–355 (LGHGNYGSV) and Lys368. The residue at position 410 (Tyr410) is a Phosphotyrosine. Asp464 (proton acceptor) is an active-site residue. A Phosphoserine modification is found at Ser468. A phosphothreonine mark is found at Thr500 and Thr505. A Phosphotyrosine modification is found at Tyr513.

The protein belongs to the protein kinase superfamily. Ser/Thr protein kinase family.

The protein resides in the cell membrane. Putative Lysin motif (LysM) receptor kinase that may recognize microbe-derived N-acetylglucosamine (NAG)-containing ligands. This is LysM domain receptor-like kinase 3 (LYK3) from Arabidopsis thaliana (Mouse-ear cress).